A 553-amino-acid polypeptide reads, in one-letter code: Serine/threonine-protein kinase WNG2 (553 aa).

Disordered stretches follow at residues 1–20 (MMFP…RLQR) and 88–107 (NREP…GGAE). An N-terminal signal peptide occupies residues 1–64 (MMFPAVAAPP…GLSWVSVAVA (64 aa)). The Protein kinase domain occupies 125–395 (FKQLRPVDEF…IGEVMEDPFF (271 aa)). Residue K186 participates in ATP binding. The active-site Proton acceptor is the D278. Residues 432–553 (REKADAAAKA…GFNKEDAQES (122 aa)) are disordered. A compositionally biased stretch (low complexity) spans 438–451 (AAKAADNAEVPAAK). Composition is skewed to basic and acidic residues over residues 465–486 (GDRD…EKGR), 494–524 (EGNH…ENRE), and 531–553 (QREE…AQES).

Belongs to the protein kinase superfamily. STE Ser/Thr protein kinase family. WNG subfamily. The cofactor is Mg(2+).

Its subcellular location is the cytoplasmic granule. The protein localises to the secreted. The protein resides in the parasitophorous vacuole lumen. The enzyme catalyses L-seryl-[protein] + ATP = O-phospho-L-seryl-[protein] + ADP + H(+). It catalyses the reaction L-threonyl-[protein] + ATP = O-phospho-L-threonyl-[protein] + ADP + H(+). Probable serine/threonine-protein kinase. In Toxoplasma gondii, this protein is Serine/threonine-protein kinase WNG2.